The following is an 840-amino-acid chain: Phosphatidylinositol-3-phosphatase myotubularin-1 (840 aa).

The disordered stretch occupies residues 1–28 (MTPPRPPSGRVRSLRDYSSESEKMDGTG). Basic and acidic residues predominate over residues 13-25 (SLRDYSSESEKMD). The 68-residue stretch at 45 to 112 (GSFSNLSCLL…ATIEKFNKMV (68 aa)) folds into the GRAM domain. One can recognise a Myotubularin phosphatase domain in the interval 199–650 (GKSSIRASMD…LAPTLWPQFH (452 aa)). Residues 332-335 (NGAM), 357-358 (NI), 443-449 (CSDGWDR), and R489 each bind substrate. Residue C443 is the Phosphocysteine intermediate of the active site. The interval 506–535 (QSSSAGSFPSSPVRQSSGSAASQSSSSSHG) is disordered. Low complexity predominate over residues 507–535 (SSSAGSFPSSPVRQSSGSAASQSSSSSHG). Residues 666 to 734 (VQCRAMTVKY…AALTRAVQSL (69 aa)) are a coiled coil. Residues 745-771 (VEDDPRSSLENNPRRRNRHGNNSDVSV) form a disordered region.

The protein belongs to the protein-tyrosine phosphatase family. Non-receptor class myotubularin subfamily. As to expression, mostly expressed in siliques and leaves (including hydathodes), and, to a lower extent, in flowers and roots.

The protein localises to the cytoplasm. Its subcellular location is the endosome membrane. The enzyme catalyses a 1,2-diacyl-sn-glycero-3-phospho-(1D-myo-inositol-3-phosphate) + H2O = a 1,2-diacyl-sn-glycero-3-phospho-(1D-myo-inositol) + phosphate. The catalysed reaction is a 1,2-diacyl-sn-glycero-3-phospho-(1D-myo-inositol-3,5-bisphosphate) + H2O = a 1,2-diacyl-sn-glycero-3-phospho-(1D-myo-inositol-5-phosphate) + phosphate. Functionally, phosphatase with phosphoinositide 3'-phosphatase activity that can use phosphatidylinositol-3-phosphate (PtdIns3P) and phosphatidylinositol-3,5-diphosphate (PtdIns3,5P(2)) as substrates and produces phosphatidylinositol-5-phosphate (PtdIns5P); participates in pathway(s) that transfer gene regulatory signals to the nucleus. Required for recovery after water deprivation, via the accumulation of PtdIns5P upon dehydration; high PtdIns5P levels mediate ATX1 cytoplasmic localization, thus down-regulating the expression of ATX1-dependent genes. Confers sensitivity to soil-water-deficit stress. The protein is Phosphatidylinositol-3-phosphatase myotubularin-1 (MTM1) of Arabidopsis thaliana (Mouse-ear cress).